We begin with the raw amino-acid sequence, 712 residues long: uncharacterized protein (712 aa).

Disordered stretches follow at residues 1-46, 107-264, and 370-389; these read MAKI…NNLN, NIKP…IPQA, and QPQHQQNQQNQQNQQNQQNQ. Low complexity-rich tracts occupy residues 10 to 46, 107 to 143, and 161 to 173; these read INNSLNLNNSNSNSNSNSSININNNNNSNNSNNNNLN, NIKPSQQNSPQNNSNSNNINININNNSNNGNSTSNSS, and TFDNQQTSNNSSN. Residues 178–187 show a composition bias toward polar residues; it reads ISPTTSPQLE. Composition is skewed to low complexity over residues 188–198 and 241–264; these read QHQQYQQQQHQ and PLQQQQQPQPQQQPQPQQQQIPQA.

This is an uncharacterized protein from Dictyostelium discoideum (Social amoeba).